Here is a 150-residue protein sequence, read N- to C-terminus: Transcriptional regulator MraZ (150 aa).

SpoVT-AbrB domains lie at 11 to 53 (TYTP…PFDE) and 82 to 125 (AVDQ…NKDT).

This sequence belongs to the MraZ family. As to quaternary structure, forms oligomers.

It localises to the cytoplasm. The protein localises to the nucleoid. This is Transcriptional regulator MraZ from Bifidobacterium longum (strain NCC 2705).